A 145-amino-acid chain; its full sequence is D-aminoacyl-tRNA deacylase (145 aa).

The Gly-cisPro motif, important for rejection of L-amino acids motif lies at 137–138; it reads GP.

This sequence belongs to the DTD family. Homodimer.

Its subcellular location is the cytoplasm. It carries out the reaction glycyl-tRNA(Ala) + H2O = tRNA(Ala) + glycine + H(+). It catalyses the reaction a D-aminoacyl-tRNA + H2O = a tRNA + a D-alpha-amino acid + H(+). Its function is as follows. An aminoacyl-tRNA editing enzyme that deacylates mischarged D-aminoacyl-tRNAs. Also deacylates mischarged glycyl-tRNA(Ala), protecting cells against glycine mischarging by AlaRS. Acts via tRNA-based rather than protein-based catalysis; rejects L-amino acids rather than detecting D-amino acids in the active site. By recycling D-aminoacyl-tRNA to D-amino acids and free tRNA molecules, this enzyme counteracts the toxicity associated with the formation of D-aminoacyl-tRNA entities in vivo and helps enforce protein L-homochirality. The chain is D-aminoacyl-tRNA deacylase from Francisella tularensis subsp. holarctica (strain FTNF002-00 / FTA).